Here is a 99-residue protein sequence, read N- to C-terminus: Small ribosomal subunit protein uS14m (99 aa).

It belongs to the universal ribosomal protein uS14 family.

It is found in the mitochondrion. The sequence is that of Small ribosomal subunit protein uS14m (RPS14) from Acanthamoeba castellanii (Amoeba).